A 167-amino-acid chain; its full sequence is Protein YfbM (167 aa).

As to quaternary structure, monomer.

The polypeptide is Protein YfbM (yfbM) (Escherichia coli (strain K12)).